Consider the following 579-residue polypeptide: Nuclear hormone receptor family member nhr-71 (579 aa).

Positions 8–83 form a DNA-binding region, nuclear receptor; it reads SQECMVCSAP…AGMKIGAVQP (76 aa). 2 consecutive NR C4-type zinc fingers follow at residues 11–31 and 47–71; these read CMVC…CRSC and CKHT…FTKC. 2 disordered regions span residues 82–124 and 168–189; these read QPRR…SDGP and EPIP…PNDD. Composition is skewed to polar residues over residues 106–124 and 171–186; these read SMNN…SDGP and PSTS…QSSP. An NR LBD domain is found at 189–452; it reads DEQQEFNHLV…KFWYETLCYA (264 aa).

The protein belongs to the nuclear hormone receptor family.

The protein localises to the nucleus. Orphan nuclear receptor. The polypeptide is Nuclear hormone receptor family member nhr-71 (nhr-71) (Caenorhabditis elegans).